The chain runs to 309 residues: Glutaminase (309 aa).

Substrate-binding residues include serine 64, asparagine 114, glutamate 160, asparagine 167, tyrosine 191, tyrosine 243, and valine 261.

It belongs to the glutaminase family. In terms of assembly, homotetramer.

The enzyme catalyses L-glutamine + H2O = L-glutamate + NH4(+). The polypeptide is Glutaminase (Methylorubrum populi (strain ATCC BAA-705 / NCIMB 13946 / BJ001) (Methylobacterium populi)).